The chain runs to 378 residues: Cytochrome b (378 aa).

Helical transmembrane passes span 34-54 (FGSLLGLCLIIQILTGLFLAM), 78-99 (WLLRTLHANGASFFFICIYLHV), 114-134 (WLIGVIILFLVMGTAFMGYVL), and 179-199 (FFTFHFILPFIVLAMTMIHLL). The heme b site is built by histidine 84 and histidine 98. The heme b site is built by histidine 183 and histidine 197. An a ubiquinone-binding site is contributed by histidine 202. The next 4 helical transmembrane spans lie at 227 to 247 (FKDIVGFIVMIFILISLVLIS), 289 to 309 (LGGVIALVLSIAILMILPFYN), 321 to 341 (INQVMFWSMLVTVILLTWIGA), and 348 to 368 (YVLIGQILTVVYFLYYLVNPL).

The protein belongs to the cytochrome b family. As to quaternary structure, the main subunits of complex b-c1 are: cytochrome b, cytochrome c1 and the Rieske protein. Heme b serves as cofactor.

The protein resides in the mitochondrion inner membrane. Its function is as follows. Component of the ubiquinol-cytochrome c reductase complex (complex III or cytochrome b-c1 complex) that is part of the mitochondrial respiratory chain. The b-c1 complex mediates electron transfer from ubiquinol to cytochrome c. Contributes to the generation of a proton gradient across the mitochondrial membrane that is then used for ATP synthesis. The sequence is that of Cytochrome b (mt:Cyt-b) from Drosophila mauritiana (Fruit fly).